Here is a 290-residue protein sequence, read N- to C-terminus: MYG1 protein CPn_0489/CP_0265/CPj0489/CpB0509 (290 aa).

This sequence belongs to the MYG1 family.

This chain is MYG1 protein CPn_0489/CP_0265/CPj0489/CpB0509, found in Chlamydia pneumoniae (Chlamydophila pneumoniae).